We begin with the raw amino-acid sequence, 204 residues long: dCTP deaminase, dUMP-forming (204 aa).

DCTP is bound by residues 117 to 122 (RSSLGR), His128, Gly132, Asp135, 143 to 145 (TLE), Gln163, Tyr177, Lys184, and Gln188. Catalysis depends on Glu145, which acts as the Proton donor/acceptor.

Homotrimer. Two trimers assemble into a hexamer by stacking on top of each other. Requires Mg(2+) as cofactor.

The enzyme catalyses dCTP + 2 H2O = dUMP + NH4(+) + diphosphate. It participates in pyrimidine metabolism; dUMP biosynthesis; dUMP from dCTP: step 1/1. With respect to regulation, inhibited by dTTP. Bifunctional enzyme that catalyzes both the deamination of dCTP to dUTP and the hydrolysis of dUTP to dUMP without releasing the toxic dUTP intermediate. It also acts as a dUTP diphosphatase with a lower affinity for dUTP than for dCTP. In Methanocaldococcus jannaschii (strain ATCC 43067 / DSM 2661 / JAL-1 / JCM 10045 / NBRC 100440) (Methanococcus jannaschii), this protein is dCTP deaminase, dUMP-forming.